The sequence spans 361 residues: Deoxyhypusine hydroxylase (361 aa).

HEAT-like PBS-type repeat units lie at residues 59–85 (LKHELAYVLGQLLNTRALPTLSRVLEN), 94–120 (VRHEAAEALGAIGAEESLPILRKYMQD), 183–211 (QRYRAMFALRDFGAGSKEAVEALADGFRD), and 216–242 (FRHEIAYIFGQLSSPYSIPSLLSRLRD). Positions 61, 62, 96, and 97 each coordinate Fe cation. 4 residues coordinate Fe cation: His-218, Glu-219, His-251, and Glu-252.

The protein belongs to the deoxyhypusine hydroxylase family. Fe(2+) is required as a cofactor.

It is found in the cytoplasm. The protein resides in the nucleus. The catalysed reaction is [eIF5A protein]-deoxyhypusine + AH2 + O2 = [eIF5A protein]-hypusine + A + H2O. The protein operates within protein modification; eIF5A hypusination. Its function is as follows. Catalyzes the hydroxylation of the N(6)-(4-aminobutyl)-L-lysine intermediate to form hypusine, an essential post-translational modification only found in mature eIF-5A factor. This chain is Deoxyhypusine hydroxylase, found in Cryptococcus neoformans var. neoformans serotype D (strain B-3501A) (Filobasidiella neoformans).